We begin with the raw amino-acid sequence, 450 residues long: Protein phosphatase 1F (450 aa).

One can recognise a PPM-type phosphatase domain in the interval 152-409 (LVSIHAIRNT…DNITVMVVFL (258 aa)). Mn(2+)-binding residues include D194, G195, D356, and D400. The tract at residues 420–450 (GQGAGGAQADVGSQDLSTGLSELEINTSQRS) is disordered. Over residues 433–450 (QDLSTGLSELEINTSQRS) the composition is skewed to polar residues. S450 is subject to Phosphoserine.

Belongs to the PP2C family. Associates with FEM1B. The cofactor is Mg(2+). Mn(2+) serves as cofactor.

It carries out the reaction O-phospho-L-seryl-[protein] + H2O = L-seryl-[protein] + phosphate. The catalysed reaction is O-phospho-L-threonyl-[protein] + H2O = L-threonyl-[protein] + phosphate. Its function is as follows. Dephosphorylates and concomitantly deactivates CaM-kinase II activated upon autophosphorylation, and CaM-kinases IV and I activated upon phosphorylation by CaM-kinase kinase. Promotes apoptosis. The polypeptide is Protein phosphatase 1F (Ppm1f) (Rattus norvegicus (Rat)).